The chain runs to 206 residues: RNA-binding protein (206 aa).

The interval 87–206 (PRGMQRGNRR…SGAKSKRRPR (120 aa)) is disordered. Residues 109–132 (MPKDDSNDRKKAKTSKDRKVEKSS) show a composition bias toward basic and acidic residues.

Belongs to the phytoreovirus RNA-binding protein family.

It is found in the host cytoplasm. In terms of biological role, constituent of viral factories. Binds to ssRNA and dsRNA. In Rice gall dwarf virus (RGDV), this protein is RNA-binding protein.